A 709-amino-acid polypeptide reads, in one-letter code: Alpha-1,2-mannosyltransferase MNN24 (709 aa).

Over 1-9 (MFSIPVSSK) the chain is Cytoplasmic. A helical transmembrane segment spans residues 10–30 (TVRLILVSLLLITLINILAAF). Residues 31 to 709 (QRSTLSSWFP…KNHIEFLEIS (679 aa)) lie on the Extracellular side of the membrane. An N-linked (GlcNAc...) asparagine glycan is attached at Asn-317.

This sequence belongs to the MNN1/MNT family.

It is found in the golgi apparatus membrane. It participates in protein modification; protein glycosylation. Its function is as follows. Alpha-1,2-mannosyltransferase required for cell wall integrity. Responsible for addition of the first alpha-1,2-linked mannose to form the branches on the mannan backbone of oligosaccharides. Addition of alpha-1,2-mannose is required for stabilization of the alpha-1,6-mannose backbone and hence regulates mannan fibril length; and is important for both immune recognition and virulence. The protein is Alpha-1,2-mannosyltransferase MNN24 (MNN24) of Candida albicans (strain SC5314 / ATCC MYA-2876) (Yeast).